Reading from the N-terminus, the 248-residue chain is tRNA pseudouridine synthase A (248 aa).

The active-site Nucleophile is Asp53. Tyr111 provides a ligand contact to substrate.

Belongs to the tRNA pseudouridine synthase TruA family. In terms of assembly, homodimer.

It catalyses the reaction uridine(38/39/40) in tRNA = pseudouridine(38/39/40) in tRNA. Functionally, formation of pseudouridine at positions 38, 39 and 40 in the anticodon stem and loop of transfer RNAs. The sequence is that of tRNA pseudouridine synthase A from Streptococcus thermophilus (strain ATCC BAA-491 / LMD-9).